The following is a 29-amino-acid chain: Small toxic protein ZorP (29 aa).

Residues 10 to 27 form a helical membrane-spanning segment; the sequence is VLIAVLELLVALLRLIDL.

The protein resides in the membrane. Functionally, toxic component of a type I toxin-antitoxin (TA) system. Overexpression leads to cell stasis and a decrease in colony-forming units. Probably repressed by cognate small RNA orzP. Base pairing occurs between 18 bases in the 5' UTR of zorP mRNA and the 5' end of OrzP sRNA. This Escherichia coli O157:H7 protein is Small toxic protein ZorP.